Here is a 769-residue protein sequence, read N- to C-terminus: Serine/threonine-protein kinase PLK4 (769 aa).

Positions 14 to 267 (YEVQHLLGKG…LEAVLCHPFM (254 aa)) constitute a Protein kinase domain. Residues 20 to 28 (LGKGGFATV) and Lys43 each bind ATP. Asp138 functions as the Proton acceptor in the catalytic mechanism. The 118-residue stretch at 381–498 (EDRISVPPLN…ARFVGLVKSK (118 aa)) folds into the Cryptic POLO box 1 (CPB1) domain. The Cryptic POLO box 2 (CPB2) domain occupies 499–602 (TPKVTYFSTL…GRRPITDVQP (104 aa)). One can recognise a POLO box domain in the interval 660-739 (PIKRINVPEI…IPNIQLKLKT (80 aa)).

Belongs to the protein kinase superfamily. Ser/Thr protein kinase family. CDC5/Polo subfamily. Homodimer. Interacts with Alms1a. Ubiquitinated by the SCF-slmb ubiquitin ligase complex; leading to its degradation by the proteasome during interphase and regulating centriole number and ensuring the block to centriole reduplication. Expressed in testis (at protein level).

The protein localises to the cytoplasm. Its subcellular location is the cytoskeleton. It localises to the microtubule organizing center. The protein resides in the centrosome. It is found in the centriole. It carries out the reaction L-seryl-[protein] + ATP = O-phospho-L-seryl-[protein] + ADP + H(+). The enzyme catalyses L-threonyl-[protein] + ATP = O-phospho-L-threonyl-[protein] + ADP + H(+). In terms of biological role, serine/threonine-protein kinase that plays a central role in centriole duplication. Able to trigger procentriole formation on the surface of the mother centriole cylinder, using mother centriole as a platform, leading to the recruitment of centriole biogenesis proteins such as Sas-6. When overexpressed, it is able to induce centrosome amplification through the simultaneous generation of multiple procentrioles adjoining each parental centriole during S phase. Centrosome amplification following overexpression can initiate tumorigenesis, highlighting the importance of centrosome regulation in cancers. The chain is Serine/threonine-protein kinase PLK4 (SAK) from Drosophila melanogaster (Fruit fly).